The chain runs to 155 residues: Small ribosomal subunit protein uS9 (155 aa).

It belongs to the universal ribosomal protein uS9 family.

The sequence is that of Small ribosomal subunit protein uS9 from Rhizobium johnstonii (strain DSM 114642 / LMG 32736 / 3841) (Rhizobium leguminosarum bv. viciae).